A 458-amino-acid chain; its full sequence is tRNA modification GTPase MnmE (458 aa).

Residues R22, E84, and R123 each contribute to the (6S)-5-formyl-5,6,7,8-tetrahydrofolate site. One can recognise a TrmE-type G domain in the interval 220-379; that stretch reads GISTAIIGRP…LEKAIADLFF (160 aa). Residue N230 coordinates K(+). GTP contacts are provided by residues 230–235, 249–255, and 274–277; these read NVGKSS, TDIAGTT, and DTAG. Position 234 (S234) interacts with Mg(2+). Residues T249, I251, and T254 each coordinate K(+). Position 255 (T255) interacts with Mg(2+). A (6S)-5-formyl-5,6,7,8-tetrahydrofolate-binding site is contributed by K458.

This sequence belongs to the TRAFAC class TrmE-Era-EngA-EngB-Septin-like GTPase superfamily. TrmE GTPase family. As to quaternary structure, homodimer. Heterotetramer of two MnmE and two MnmG subunits. It depends on K(+) as a cofactor.

It localises to the cytoplasm. Exhibits a very high intrinsic GTPase hydrolysis rate. Involved in the addition of a carboxymethylaminomethyl (cmnm) group at the wobble position (U34) of certain tRNAs, forming tRNA-cmnm(5)s(2)U34. This Bacillus mycoides (strain KBAB4) (Bacillus weihenstephanensis) protein is tRNA modification GTPase MnmE.